The following is a 342-amino-acid chain: MTNILSPEKSENDQELPIRPSYLQEFVGQQQIKENLSVFIKAAKSRNEHLDHTLFYGPPGLGKTTLAKIISNEIGGNFKSTSGPAILKVADLAAILTNLEKNDVLFIDEIHRLNTAVEEVLYPAMEDFELDIIIGEGSAARSVKITLPKFTLIGATTRLGLLSNPLRDRFGIPMRLNFYNTEELKKVLNRASKLLDIDLTDSGSEEIAKRSRGTPRIALRLLRRIRDFAAVDGKSRVDKEISDFGLKRLEVDRIGLDSNDYRYLKFIADNYNGGPVGIETIAAALSEQRDALEETIEPYLIQIGLLQRTPRGRVITIAAFEHLKMPVPNQSHHQFNIFNENE.

The large ATPase domain (RuvB-L) stretch occupies residues 1 to 179 (MTNILSPEKS…FGIPMRLNFY (179 aa)). Residues I18, R19, G60, K63, T64, T65, 126-128 (EDF), R169, Y179, and R216 contribute to the ATP site. T64 contributes to the Mg(2+) binding site. Positions 180–250 (NTEELKKVLN…ISDFGLKRLE (71 aa)) are small ATPAse domain (RuvB-S). A head domain (RuvB-H) region spans residues 253 to 342 (RIGLDSNDYR…HQFNIFNENE (90 aa)). DNA is bound by residues R289, R308, and R313.

The protein belongs to the RuvB family. In terms of assembly, homohexamer. Forms an RuvA(8)-RuvB(12)-Holliday junction (HJ) complex. HJ DNA is sandwiched between 2 RuvA tetramers; dsDNA enters through RuvA and exits via RuvB. An RuvB hexamer assembles on each DNA strand where it exits the tetramer. Each RuvB hexamer is contacted by two RuvA subunits (via domain III) on 2 adjacent RuvB subunits; this complex drives branch migration. In the full resolvosome a probable DNA-RuvA(4)-RuvB(12)-RuvC(2) complex forms which resolves the HJ.

The protein resides in the cytoplasm. It catalyses the reaction ATP + H2O = ADP + phosphate + H(+). The RuvA-RuvB-RuvC complex processes Holliday junction (HJ) DNA during genetic recombination and DNA repair, while the RuvA-RuvB complex plays an important role in the rescue of blocked DNA replication forks via replication fork reversal (RFR). RuvA specifically binds to HJ cruciform DNA, conferring on it an open structure. The RuvB hexamer acts as an ATP-dependent pump, pulling dsDNA into and through the RuvAB complex. RuvB forms 2 homohexamers on either side of HJ DNA bound by 1 or 2 RuvA tetramers; 4 subunits per hexamer contact DNA at a time. Coordinated motions by a converter formed by DNA-disengaged RuvB subunits stimulates ATP hydrolysis and nucleotide exchange. Immobilization of the converter enables RuvB to convert the ATP-contained energy into a lever motion, pulling 2 nucleotides of DNA out of the RuvA tetramer per ATP hydrolyzed, thus driving DNA branch migration. The RuvB motors rotate together with the DNA substrate, which together with the progressing nucleotide cycle form the mechanistic basis for DNA recombination by continuous HJ branch migration. Branch migration allows RuvC to scan DNA until it finds its consensus sequence, where it cleaves and resolves cruciform DNA. This chain is Holliday junction branch migration complex subunit RuvB, found in Rickettsia peacockii (strain Rustic).